The primary structure comprises 400 residues: Nicotinate phosphoribosyltransferase (400 aa).

His-220 carries the post-translational modification Phosphohistidine; by autocatalysis.

This sequence belongs to the NAPRTase family. In terms of processing, transiently phosphorylated on a His residue during the reaction cycle. Phosphorylation strongly increases the affinity for substrates and increases the rate of nicotinate D-ribonucleotide production. Dephosphorylation regenerates the low-affinity form of the enzyme, leading to product release.

It catalyses the reaction nicotinate + 5-phospho-alpha-D-ribose 1-diphosphate + ATP + H2O = nicotinate beta-D-ribonucleotide + ADP + phosphate + diphosphate. It functions in the pathway cofactor biosynthesis; NAD(+) biosynthesis; nicotinate D-ribonucleotide from nicotinate: step 1/1. Catalyzes the synthesis of beta-nicotinate D-ribonucleotide from nicotinate and 5-phospho-D-ribose 1-phosphate at the expense of ATP. In Salmonella typhi, this protein is Nicotinate phosphoribosyltransferase.